We begin with the raw amino-acid sequence, 305 residues long: Ribonuclease BN (305 aa).

7 residues coordinate Zn(2+): H64, H66, D68, H69, H141, D212, and H270. The Proton acceptor role is filled by D68.

This sequence belongs to the RNase Z family. RNase BN subfamily. Homodimer. The cofactor is Zn(2+).

Its function is as follows. Zinc phosphodiesterase, which has both exoribonuclease and endoribonuclease activities. This chain is Ribonuclease BN, found in Escherichia coli O139:H28 (strain E24377A / ETEC).